We begin with the raw amino-acid sequence, 873 residues long: V-type proton ATPase 116 kDa subunit a 2 (873 aa).

Topologically, residues 1 to 407 (MGSLSRSEEM…TIITFPFLFS (407 aa)) are cytoplasmic. The chain crosses the membrane as a helical span at residues 408-428 (CMFGDLGHGCIMLMAGLWFVL). Residues 429 to 445 (REKNLQARNIKDEIFNM) are Lumenal-facing. Residues 446-466 (FFGGRYIILLMGLFSIHAGII) form a helical membrane-spanning segment. Topologically, residues 467-543 (YNDMFAKSFN…NKLNFLNSMK (77 aa)) are cytoplasmic. The chain crosses the membrane as a helical span at residues 544–564 (MKLSVILGISQMTFGVILSFF). Asn565 and Asn569 each carry an N-linked (GlcNAc...) asparagine glycan. Topologically, residues 565 to 574 (NHTYNKSKID) are lumenal. Residues 575–595 (IFTVFIPQMLFMGCIFMYLCL) traverse the membrane as a helical segment. At 596 to 614 (QIILKWLFFWTKEATVFGQ) the chain is on the cytoplasmic side. A helical membrane pass occupies residues 615-635 (IYPGSHCAPSLLIGLINMFMM). Residues 636–668 (KDRNAGFVVDGGKVNGEYREVETCYLSQWYPGQ) are Lumenal-facing. The chain crosses the membrane as a helical span at residues 669 to 689 (SVIEMILVVIAVICVPVMLFG). Topologically, residues 690–785 (KPIHHVMQQK…LWALSLAHAQ (96 aa)) are cytoplasmic. A helical transmembrane segment spans residues 786-806 (LSEVLWHMVFVTGGLGISGTA). Position 807 (Gly807) is a topological domain, lumenal. A helical transmembrane segment spans residues 808 to 828 (FIAVYVVFFIFFVLTISILVL). Residues 829-873 (MEGLSAFLHTLRLHWVEFQSKFYLGLGYPFVPYSFKTALQEAEAA) are Cytoplasmic-facing.

Belongs to the V-ATPase 116 kDa subunit family. V-ATPase is a heteromultimeric enzyme made up of two complexes: the ATP-hydrolytic V1 complex and the proton translocation V0 complex. The V1 complex consists of three catalytic AB heterodimers that form a heterohexamer, three peripheral stalks each consisting of EG heterodimers, one central rotor including subunits D and F, and the regulatory subunits C and H. The proton translocation complex V0 consists of the proton transport subunit a, a ring of proteolipid subunits c9c'', rotary subunit d, subunits e and f, and the accessory subunits vah-19/Ac45 and vah-20/PRR. Interacts with V-type proton ATPase subunit C vha-11. As to expression, expressed in the H-shaped excretory cell (at protein level). Expressed in hypodermal cells around the vulva. Expressed in the main epidermal syncytium. Expressed in the sheath cells associated with head and tail sensory organs; specifically, expressed in the apical sheath cells of the amphids and CEP neuron and in the sheath cells of the OLQ sensory organ.

It is found in the apical cell membrane. Its subcellular location is the endosome. It localises to the multivesicular body membrane. Its function is as follows. Subunit of the V0 complex of vacuolar(H+)-ATPase (V-ATPase), a multisubunit enzyme composed of a peripheral complex (V1) that hydrolyzes ATP and a membrane integral complex (V0) that translocates protons. V-ATPase is responsible for acidifying and maintaining the pH of intracellular compartments and in some cell types, is targeted to the plasma membrane, where it is responsible for acidifying the extracellular environment. Involved in the assembly of the V-ATPase complex. The V-ATPase is required for the function of the excretory canal. Independently of the V1 complex, the V0 complex of the V-ATPase is required for multivesicular body membrane fusion with the apical membrane of the epidermal cells during exosome release and thus regulates the release of cuticle components such as Hedgehog-related peptide wrt-2 but not collagen. Also, in the epidermis, regulates the trafficking of che-14 and rdy-2. Regulates the secretion of granular material found in the amphid channel and in controlling osmoregulation in the amphid pocket. The chain is V-type proton ATPase 116 kDa subunit a 2 from Caenorhabditis elegans.